Consider the following 641-residue polypeptide: Single-strand DNA endonuclease 1 (641 aa).

Positions 1 to 90 (MGVKNLWDIL…SLKLATYRRR (90 aa)) are N-domain. Positions 2–97 (GVKNLWDILE…RRRLGSISHA (96 aa)) are XPG-N domain. Mg(2+) is bound by residues D30, D76, E144, E146, D165, D167, and D217. The segment at 132–217 (MALGIPCLDG…ISLAVLLGSD (86 aa)) is XPG-I domain. I-domain stretches follow at residues 132–220 (MALG…DYSN) and 132–221 (MALG…YSNG). Residues 217 to 350 (DYSNGVNGFG…ILPKIAEREL (134 aa)) form a 5'-3' exonuclease domain region. Disordered regions lie at residues 428 to 448 (KGEE…QAAV) and 572 to 615 (VGSH…RVHH). Positions 580-590 (DGGGGGGGGVA) are enriched in gly residues.

Belongs to the XPG/RAD2 endonuclease family. GEN subfamily. It depends on Mg(2+) as a cofactor. In terms of tissue distribution, highly expressed in shoot apical meristem (SAM) and young leaves. Expressed in roots, flag leaf and panicles.

The protein localises to the nucleus. Its function is as follows. Single-stranded DNA endonuclease activity in vitro. May not be active as double-stranded DNA endonuclease. Endonuclease which cleaves flap structures at the junction between single-stranded DNA and double-stranded DNA with a specific cleavage site in the 5' overhang strand exactly one nucleotide 3' of the branch point. Structure- and sequence-specific nuclease that resolves holliday junctions (HJs) by symmetrically oriented incisions in two opposing strands near the junction point, thus leading to ligatable products; HJs are physical links between homologous DNA molecules that arise as central intermediary structures during homologous recombination and repair in meiotic and somatic cells. Probably involved in the resolution of toxic replication structures to ensure genome stability, and to maintain telomere integrity and replication. This Oryza sativa subsp. japonica (Rice) protein is Single-strand DNA endonuclease 1.